The primary structure comprises 232 residues: Putative uridine kinase DAS2 (232 aa).

Residue 17–24 (GGHATGVG) coordinates ATP.

The protein belongs to the uridine kinase family.

It localises to the cytoplasm. It is found in the nucleus. It catalyses the reaction uridine + ATP = UMP + ADP + H(+). The catalysed reaction is cytidine + ATP = CMP + ADP + H(+). The protein operates within pyrimidine metabolism; CTP biosynthesis via salvage pathway; CTP from cytidine: step 1/3. It participates in pyrimidine metabolism; UMP biosynthesis via salvage pathway; UMP from uridine: step 1/1. Its function is as follows. Putative uridine kinase identified in a screen for mutants with increased levels of rDNA transcription. The polypeptide is Putative uridine kinase DAS2 (DAS2) (Saccharomyces cerevisiae (strain ATCC 204508 / S288c) (Baker's yeast)).